The sequence spans 804 residues: Leucine--tRNA ligase (804 aa).

Positions 40–51 match the 'HIGH' region motif; sequence PYPSGQGLHVGH. The 'KMSKS' region motif lies at 576-580; that stretch reads KMSKS. ATP is bound at residue Lys-579.

This sequence belongs to the class-I aminoacyl-tRNA synthetase family.

It is found in the cytoplasm. The enzyme catalyses tRNA(Leu) + L-leucine + ATP = L-leucyl-tRNA(Leu) + AMP + diphosphate. The polypeptide is Leucine--tRNA ligase (Enterococcus faecalis (strain ATCC 700802 / V583)).